Here is a 256-residue protein sequence, read N- to C-terminus: Thiazole synthase (256 aa).

Lys-96 (schiff-base intermediate with DXP) is an active-site residue. 1-deoxy-D-xylulose 5-phosphate-binding positions include Gly-157, 184–185 (AG), and 206–207 (NT).

It belongs to the ThiG family. Homotetramer. Forms heterodimers with either ThiH or ThiS.

Its subcellular location is the cytoplasm. The catalysed reaction is [ThiS sulfur-carrier protein]-C-terminal-Gly-aminoethanethioate + 2-iminoacetate + 1-deoxy-D-xylulose 5-phosphate = [ThiS sulfur-carrier protein]-C-terminal Gly-Gly + 2-[(2R,5Z)-2-carboxy-4-methylthiazol-5(2H)-ylidene]ethyl phosphate + 2 H2O + H(+). It functions in the pathway cofactor biosynthesis; thiamine diphosphate biosynthesis. Its function is as follows. Catalyzes the rearrangement of 1-deoxy-D-xylulose 5-phosphate (DXP) to produce the thiazole phosphate moiety of thiamine. Sulfur is provided by the thiocarboxylate moiety of the carrier protein ThiS. In vitro, sulfur can be provided by H(2)S. The chain is Thiazole synthase from Brucella melitensis biotype 2 (strain ATCC 23457).